A 362-amino-acid chain; its full sequence is Probable endopolygalacturonase B (362 aa).

Residues 1-20 (MHFLQNAFVAATMGAAPAAA) form the signal peptide. A propeptide spanning residues 21 to 25 (TPLEK) is cleaved from the precursor. Cysteine 28 and cysteine 43 are joined by a disulfide. PbH1 repeat units lie at residues 155-184 (ADHL…DIGQ), 185-206 (STYI…AINS), 207-227 (GEHI…SIGS), 236-257 (VNDV…RIKT), 265-287 (VENV…VVEQ), and 299-344 (TNGV…DVTG). The active-site Proton donor is the aspartate 199. A disulfide bond links cysteine 201 and cysteine 217. The active site involves histidine 221. A disulfide bond links cysteine 327 and cysteine 332. Residue asparagine 334 is glycosylated (N-linked (GlcNAc...) asparagine). The cysteines at positions 351 and 360 are disulfide-linked.

It belongs to the glycosyl hydrolase 28 family.

Its subcellular location is the secreted. The enzyme catalyses (1,4-alpha-D-galacturonosyl)n+m + H2O = (1,4-alpha-D-galacturonosyl)n + (1,4-alpha-D-galacturonosyl)m.. Involved in maceration and soft-rotting of plant tissue. Hydrolyzes the 1,4-alpha glycosidic bonds of de-esterified pectate in the smooth region of the plant cell wall. The chain is Probable endopolygalacturonase B (pgaB) from Aspergillus kawachii (White koji mold).